The sequence spans 127 residues: MLKKIIFGITISLTTGCFANSTASNLSKKDVAKTNDVNTQKIIDDFSVYAGTIKPEVREEIQKYRVEIVDINKKKRELYNRLSKEAQSFLAEQQKYKQKLSIPKLLIENDPKNNTANSKDNNDKDMK.

An N-terminal signal peptide occupies residues 1–16; that stretch reads MLKKIIFGITISLTTG. Cys17 carries N-palmitoyl cysteine lipidation. The S-diacylglycerol cysteine moiety is linked to residue Cys17. Residues 56 to 101 are a coiled coil; the sequence is EVREEIQKYRVEIVDINKKKRELYNRLSKEAQSFLAEQQKYKQKLS. Residues 102-127 are disordered; sequence IPKLLIENDPKNNTANSKDNNDKDMK.

It localises to the cell membrane. This is an uncharacterized protein from Rickettsia prowazekii (strain Madrid E).